Consider the following 251-residue polypeptide: Histocompatibility antigen 60b (251 aa).

An N-terminal signal peptide occupies residues 1–24 (MAKSSLSLNWSLLVLLNFLGATLS). The Extracellular segment spans residues 25–212 (TGTDSLSCEL…NSDTQGLSFT (188 aa)). N-linked (GlcNAc...) asparagine glycosylation is found at Asn-63, Asn-93, Asn-126, and Asn-189. The chain crosses the membrane as a helical span at residues 213-233 (WIVIICIGGIVSFMAFMVFAW). The Cytoplasmic portion of the chain corresponds to 234–251 (CMLKKKKGALCCSSSSTT).

It belongs to the NKG2D ligand family. In terms of tissue distribution, in strain C57BL/6J, strongly expressed in cardiac muscle and skeletal muscle, with lower expression levels in spleen, liver, kidney and thymus. In strain BALB/cJ, weakly expressed in cardiac muscle, spleen, kidney and thymus.

The protein resides in the cell membrane. Its function is as follows. Ligand for the KLRK1 immunosurveillance receptor. Binding to KLRK1 stimulates cell lysis in vitro. This chain is Histocompatibility antigen 60b, found in Mus musculus (Mouse).